A 579-amino-acid polypeptide reads, in one-letter code: Alpha-glucosidase (579 aa).

Asp-212 (nucleophile) is an active-site residue. Glu-269 (proton donor) is an active-site residue.

The protein belongs to the glycosyl hydrolase 13 family.

The enzyme catalyses Hydrolysis of terminal, non-reducing (1-&gt;4)-linked alpha-D-glucose residues with release of alpha-D-glucose.. The chain is Alpha-glucosidase (mal1) from Schizosaccharomyces pombe (strain 972 / ATCC 24843) (Fission yeast).